The chain runs to 361 residues: tRNA/tmRNA (uracil-C(5))-methyltransferase (361 aa).

The S-adenosyl-L-methionine site is built by Q183, Y211, N216, E232, and D294. Catalysis depends on C319, which acts as the Nucleophile. The Proton acceptor role is filled by E353.

Belongs to the class I-like SAM-binding methyltransferase superfamily. RNA M5U methyltransferase family. TrmA subfamily.

It catalyses the reaction uridine(54) in tRNA + S-adenosyl-L-methionine = 5-methyluridine(54) in tRNA + S-adenosyl-L-homocysteine + H(+). The catalysed reaction is uridine(341) in tmRNA + S-adenosyl-L-methionine = 5-methyluridine(341) in tmRNA + S-adenosyl-L-homocysteine + H(+). Functionally, dual-specificity methyltransferase that catalyzes the formation of 5-methyluridine at position 54 (m5U54) in all tRNAs, and that of position 341 (m5U341) in tmRNA (transfer-mRNA). The sequence is that of tRNA/tmRNA (uracil-C(5))-methyltransferase from Acinetobacter baumannii (strain AB307-0294).